Reading from the N-terminus, the 231-residue chain is 7-cyano-7-deazaguanine synthase (231 aa).

8–18 contributes to the ATP binding site; the sequence is FSGGQDSTTCL. Zn(2+) is bound by residues Cys187, Cys196, Cys199, and Cys202.

Belongs to the QueC family. The cofactor is Zn(2+).

The enzyme catalyses 7-carboxy-7-deazaguanine + NH4(+) + ATP = 7-cyano-7-deazaguanine + ADP + phosphate + H2O + H(+). It functions in the pathway purine metabolism; 7-cyano-7-deazaguanine biosynthesis. Catalyzes the ATP-dependent conversion of 7-carboxy-7-deazaguanine (CDG) to 7-cyano-7-deazaguanine (preQ(0)). The polypeptide is 7-cyano-7-deazaguanine synthase (Vibrio vulnificus (strain CMCP6)).